Reading from the N-terminus, the 471-residue chain is Heat shock 70 kDa protein 13 (471 aa).

Residues 1–22 form the signal peptide; it reads MAREMTILGSAVLTLLLAGYLA. Residues 314–352 form a disordered region; it reads EEQDRKEPHSSDTELPKDKLSSADDHRVNSGFGRGLSDK. Basic and acidic residues predominate over residues 315–341; sequence EQDRKEPHSSDTELPKDKLSSADDHRV.

Belongs to the heat shock protein 70 family. As to quaternary structure, binds UBQLN2.

The protein localises to the microsome. It is found in the endoplasmic reticulum. Its function is as follows. Has peptide-independent ATPase activity. The sequence is that of Heat shock 70 kDa protein 13 (HSPA13) from Pongo abelii (Sumatran orangutan).